A 485-amino-acid chain; its full sequence is Podocalyxin (485 aa).

An N-terminal signal peptide occupies residues 1–24 (MRPTLALSALLLLQLLLLSTPSLS). The tract at residues 22–267 (SLSQDNGNKT…STPSSTWTSG (246 aa)) is disordered. The Extracellular portion of the chain corresponds to 25-386 (QDNGNKTDTS…PPEVNEDRFS (362 aa)). Residues 26 to 57 (DNGNKTDTSDITSIDQNQDKPATNQPSNATPK) show a composition bias toward polar residues. Asn29 and Asn82 each carry an N-linked (GlcNAc...) asparagine glycan. Positions 58–109 (SSVQPPTPTSISTSSPDPKATQSSNSSVTTTSDSTTDRTSSSTSTVPTTSNS) are enriched in low complexity. Polar residues-rich tracts occupy residues 110-128 (GQTV…TALP) and 135-149 (NASS…STKL). N-linked (GlcNAc...) asparagine glycosylation is found at Asn135, Asn144, and Asn156. The segment covering 150-161 (PSTPTTNSTASP) has biased composition (low complexity). Polar residues-rich tracts occupy residues 163–176 (QPVS…TTVQ), 186–228 (DNTT…QPTG), and 235–253 (SVPT…TPVV). A glycan (N-linked (GlcNAc...) asparagine) is linked at Asn187. Over residues 254–267 (SQGPSTPSSTWTSG) the composition is skewed to low complexity. An N-linked (GlcNAc...) asparagine glycan is attached at Asn287. Residues 387 to 407 (LPLIITIVCMASFLLLVAALY) form a helical membrane-spanning segment. The Cytoplasmic portion of the chain corresponds to 408-485 (GCCHQRISQR…DLDEEEDTHL (78 aa)). Residue Thr445 is modified to Phosphothreonine. At Ser464 the chain carries Phosphoserine. Residue Thr483 is modified to Phosphothreonine.

This sequence belongs to the podocalyxin family. As to quaternary structure, monomer; when associated with the membrane raft. Oligomer; when integrated in the apical membrane. Interacts with NHERF2. Interacts (via the C-terminal PDZ-binding motif DTHL) with NHERF1 (via the PDZ domains); the interaction take place early in the secretory pathway and is necessary for its apical membrane sorting. Found in a complex with EZR, PODXL and NHERF2. Associates with the actin cytoskeleton through complex formation with EZR and NHERF2. Interacts (via the C-terminal PDZ-binding motif DTHL) with NHERF1 (via the PDZ domains); interaction is not detected in glomerular epithelium cells. Interacts (via the C-terminal PDZ-binding motif DTHL) with NHERF2 (via the PDZ 1 domain); interaction is detected in glomerular epithelium cells. Interacts with EZR. Post-translationally, N- and O-linked glycosylated. Sialoglycoprotein. In terms of tissue distribution, glomerular epithelium cell (podocyte) (at protein level).

The protein resides in the apical cell membrane. It is found in the cell projection. It localises to the microvillus. Its subcellular location is the membrane raft. The protein localises to the lamellipodium. The protein resides in the filopodium. It is found in the ruffle. It localises to the membrane. Involved in the regulation of both adhesion and cell morphology and cancer progression. Functions as an anti-adhesive molecule that maintains an open filtration pathway between neighboring foot processes in the podocyte by charge repulsion. Acts as a pro-adhesive molecule, enhancing the adherence of cells to immobilized ligands, increasing the rate of migration and cell-cell contacts in an integrin-dependent manner. Induces the formation of apical actin-dependent microvilli. Involved in the formation of a preapical plasma membrane subdomain to set up initial epithelial polarization and the apical lumen formation during renal tubulogenesis. Plays a role in cancer development and aggressiveness by inducing cell migration and invasion through its interaction with the actin-binding protein EZR. Affects EZR-dependent signaling events, leading to increased activities of the MAPK and PI3K pathways in cancer cells. This is Podocalyxin (Podxl) from Rattus norvegicus (Rat).